A 450-amino-acid chain; its full sequence is tRNA modification GTPase MnmE (450 aa).

(6S)-5-formyl-5,6,7,8-tetrahydrofolate contacts are provided by Arg-23, Glu-81, and Lys-120. Residues 216–373 enclose the TrmE-type G domain; sequence GIHLVLAGKP…LLKKIATLAG (158 aa). GTP contacts are provided by residues 226–231, 245–251, 270–273, and 337–340; these read NAGKSS, TPQAGTT, DTAG, and NKAD. Mg(2+) contacts are provided by Ser-230 and Thr-251. A (6S)-5-formyl-5,6,7,8-tetrahydrofolate-binding site is contributed by Lys-450.

Belongs to the TRAFAC class TrmE-Era-EngA-EngB-Septin-like GTPase superfamily. TrmE GTPase family. As to quaternary structure, homodimer. Heterotetramer of two MnmE and two MnmG subunits. It depends on K(+) as a cofactor.

The protein resides in the cytoplasm. Functionally, exhibits a very high intrinsic GTPase hydrolysis rate. Involved in the addition of a carboxymethylaminomethyl (cmnm) group at the wobble position (U34) of certain tRNAs, forming tRNA-cmnm(5)s(2)U34. The protein is tRNA modification GTPase MnmE of Dichelobacter nodosus (strain VCS1703A).